The primary structure comprises 217 residues: Ribulose-phosphate 3-epimerase (217 aa).

Serine 6 provides a ligand contact to substrate. A divalent metal cation contacts are provided by histidine 29, aspartate 31, and histidine 62. The active-site Proton acceptor is the aspartate 31. Residues histidine 62, 138–141 (GFGG), 171–173 (DGG), and 193–194 (GS) contribute to the substrate site. Aspartate 171 contacts a divalent metal cation. Aspartate 171 serves as the catalytic Proton donor.

It belongs to the ribulose-phosphate 3-epimerase family. A divalent metal cation is required as a cofactor.

It catalyses the reaction D-ribulose 5-phosphate = D-xylulose 5-phosphate. Its pathway is carbohydrate degradation. Its function is as follows. Catalyzes the reversible epimerization of D-ribulose 5-phosphate to D-xylulose 5-phosphate. The sequence is that of Ribulose-phosphate 3-epimerase from Helicobacter pylori (strain J99 / ATCC 700824) (Campylobacter pylori J99).